The primary structure comprises 927 residues: DNA polymerase alpha-binding protein (927 aa).

WD repeat units follow at residues 10–49 (FDFG…EEPE), 134–173 (KIDE…PNKV), 227–266 (AANR…LQKT), and 273–313 (STKA…IHYT). Residues Ser-377, Ser-379, and Ser-398 each carry the phosphoserine modification. Thr-401 and Thr-411 each carry phosphothreonine. The residue at position 463 (Ser-463) is a Phosphoserine. One copy of the WD 5 repeat lies at 699–739 (GSDNTLLLLSKWRSPEESKWLPILDSNMEIWKMSGGKETTD).

It is found in the nucleus. Functionally, accessory factor for DNA replication. It plays a role in accurately duplicating the genome in vivo. This is DNA polymerase alpha-binding protein (CTF4) from Saccharomyces cerevisiae (strain ATCC 204508 / S288c) (Baker's yeast).